Here is a 215-residue protein sequence, read N- to C-terminus: 3-demethoxyubiquinol 3-hydroxylase (215 aa).

E64, E94, H97, E146, E178, and H181 together coordinate Fe cation.

Belongs to the COQ7 family. Fe cation is required as a cofactor.

It localises to the cell membrane. It carries out the reaction a 5-methoxy-2-methyl-3-(all-trans-polyprenyl)benzene-1,4-diol + AH2 + O2 = a 3-demethylubiquinol + A + H2O. It participates in cofactor biosynthesis; ubiquinone biosynthesis. Functionally, catalyzes the hydroxylation of 2-nonaprenyl-3-methyl-6-methoxy-1,4-benzoquinol during ubiquinone biosynthesis. The protein is 3-demethoxyubiquinol 3-hydroxylase of Pseudomonas aeruginosa (strain LESB58).